The primary structure comprises 318 residues: D-alanine--D-alanine ligase (318 aa).

In terms of domain architecture, ATP-grasp spans 101–307 (KKIIQYEGLP…FPDLIEKLVE (207 aa)). 135–190 (CREMGLPLVVKAPTQGSTIGMSFVHKEEDMAGALELAYDYDPVALVEQFIRGTEVT) provides a ligand contact to ATP. Mg(2+) is bound by residues Asp-261, Glu-274, and Asn-276.

It belongs to the D-alanine--D-alanine ligase family. Mg(2+) is required as a cofactor. Requires Mn(2+) as cofactor.

The protein localises to the cytoplasm. It carries out the reaction 2 D-alanine + ATP = D-alanyl-D-alanine + ADP + phosphate + H(+). It participates in cell wall biogenesis; peptidoglycan biosynthesis. In terms of biological role, cell wall formation. The sequence is that of D-alanine--D-alanine ligase from Pelotomaculum thermopropionicum (strain DSM 13744 / JCM 10971 / SI).